Here is a 1013-residue protein sequence, read N- to C-terminus: Lysosomal alpha-mannosidase (1013 aa).

The N-terminal stretch at 1–49 is a signal peptide; it reads MGTGPLTSGVRAGGGNTGWLWMSSCNLGSPVLPISFLFWLLLAAPGARA. Disulfide bonds link Cys55/Cys358 and Cys268/Cys273. The Zn(2+) site is built by His72, Asp74, and Asp196. Catalysis depends on Asp196, which acts as the Nucleophile. Asn310, Asn345, and Asn367 each carry an N-linked (GlcNAc...) asparagine glycan. Cys412 and Cys472 are joined by a disulfide. A Zn(2+)-binding site is contributed by His446. Asn489, Asn497, Asn544, Asn633, Asn646, Asn693, Asn767, and Asn931 each carry an N-linked (GlcNAc...) asparagine glycan. A disulfide bridge connects residues Cys493 and Cys501.

Belongs to the glycosyl hydrolase 38 family. The cofactor is Zn(2+).

It is found in the lysosome. It carries out the reaction Hydrolysis of terminal, non-reducing alpha-D-mannose residues in alpha-D-mannosides.. Functionally, necessary for the catabolism of N-linked carbohydrates released during glycoprotein turnover. The polypeptide is Lysosomal alpha-mannosidase (Man2b1) (Mus musculus (Mouse)).